Here is a 190-residue protein sequence, read N- to C-terminus: Spermatogenesis-associated protein 12 (190 aa).

As to expression, expressed in testis.

The protein is Spermatogenesis-associated protein 12 (SPATA12) of Homo sapiens (Human).